Here is a 545-residue protein sequence, read N- to C-terminus: Delta 8-(E)-sphingolipid desaturase (545 aa).

The Cytochrome b5 heme-binding domain occupies 1 to 82 (MASHTKDALL…MLAFQIGRIQ (82 aa)). Positions 42 and 65 each coordinate heme. The disordered stretch occupies residues 97-124 (FRHYDENADSEEDDTSGQSQPPSPIFDA). A helical membrane pass occupies residues 227–247 (LGWYSVSAVFLGCFWHQLVFS). Positions 249 to 253 (HDAGH) match the Histidine box-1 motif. A helical transmembrane segment spans residues 262–282 (VDSIIGILIADFLGGLSLGWW). Positions 286–290 (HNVHH) match the Histidine box-2 motif. 2 consecutive transmembrane segments (helical) span residues 382–402 (IAGQIFFWIWFGYGVLYCSIP) and 408–428 (LSFLFISHMVTAPVHVQITLS). The Histidine box-3 signature appears at 470–474 (QAIHH).

This sequence belongs to the fatty acid desaturase type 1 family.

It localises to the membrane. It catalyses the reaction an N-acylsphing-4-enine + 2 Fe(II)-[cytochrome b5] + O2 + 2 H(+) = a (4E,8E)-4-sphinga-4,8-dienine ceramide + 2 Fe(III)-[cytochrome b5] + 2 H2O. It participates in lipid metabolism; sphingolipid metabolism. Functionally, delta(8)-fatty-acid desaturase which introduces a double bond at the 8-position in the long-chain base (LCB) of ceramides. Required for the formation of the di-unsaturated sphingoid base (E,E)-sphinga-4,8-dienine during glucosylceramide (GluCer) biosynthesis. Plays an important role in conidiation. The protein is Delta 8-(E)-sphingolipid desaturase of Emericella nidulans (strain FGSC A4 / ATCC 38163 / CBS 112.46 / NRRL 194 / M139) (Aspergillus nidulans).